The following is a 378-amino-acid chain: C-X-C chemokine receptor type 3-2 (378 aa).

At Met-1 to Pro-47 the chain is on the extracellular side. N-linked (GlcNAc...) asparagine glycans are attached at residues Asn-3 and Asn-19. The chain crosses the membrane as a helical span at residues Val-48–Ile-68. The Cytoplasmic segment spans residues Arg-69–Thr-86. A helical transmembrane segment spans residues Phe-87–Val-107. Over Glu-108–Lys-121 the chain is Extracellular. Cys-120 and Cys-199 form a disulfide bridge. Residues Ile-122–Ser-142 form a helical membrane-spanning segment. Residues Phe-143–Ala-164 lie on the Cytoplasmic side of the membrane. Residues Gln-165–Phe-185 form a helical membrane-spanning segment. At Arg-186–Gln-212 the chain is on the extracellular side. Residues Ile-213–Tyr-233 traverse the membrane as a helical segment. The Cytoplasmic portion of the chain corresponds to Cys-234–Ser-253. Residues Leu-254–Leu-274 form a helical membrane-spanning segment. Over Arg-275–Glu-304 the chain is Extracellular. A helical transmembrane segment spans residues Ser-305–Phe-325. Residues Arg-326–Ala-378 are Cytoplasmic-facing.

The protein belongs to the G-protein coupled receptor 1 family.

It localises to the cell membrane. Receptor for the C-X-C chemokines cxcl11.1 and cxcl11.6. Promotes macrophage chemotaxis to sites of bacterial infection. This Danio rerio (Zebrafish) protein is C-X-C chemokine receptor type 3-2.